A 782-amino-acid chain; its full sequence is Hypersensitive to pore-forming toxin protein 40 (782 aa).

A Tudor; degenerate domain is found at 138–203; the sequence is ESEIVPGAMY…TLFVSDQFSI (66 aa). Polar residues-rich tracts occupy residues 332–346 and 413–443; these read SVNP…SSSM and FEST…STIQ. Disordered stretches follow at residues 332-351, 413-448, 472-492, and 617-672; these read SVNP…DCPY, FEST…NEED, IERP…NMSE, and VAQG…LEDP. The span at 617–634 shows a compositional bias: polar residues; it reads VAQGSNAPKTAPNDSVNS. Positions 638 to 662 are enriched in basic and acidic residues; it reads DDIHETDKRGNHCKSVTEDPKDNKD.

The protein localises to the cytoplasm. Its subcellular location is the perinuclear region. The sequence is that of Hypersensitive to pore-forming toxin protein 40 from Caenorhabditis elegans.